We begin with the raw amino-acid sequence, 365 residues long: Chorismate synthase (365 aa).

Arg-48 and Arg-54 together coordinate NADP(+). FMN is bound by residues 131–133 (RSS), 243–244 (NA), Gly-288, 303–307 (KPTSS), and Arg-329.

It belongs to the chorismate synthase family. As to quaternary structure, homotetramer. It depends on FMNH2 as a cofactor.

It carries out the reaction 5-O-(1-carboxyvinyl)-3-phosphoshikimate = chorismate + phosphate. The protein operates within metabolic intermediate biosynthesis; chorismate biosynthesis; chorismate from D-erythrose 4-phosphate and phosphoenolpyruvate: step 7/7. In terms of biological role, catalyzes the anti-1,4-elimination of the C-3 phosphate and the C-6 proR hydrogen from 5-enolpyruvylshikimate-3-phosphate (EPSP) to yield chorismate, which is the branch point compound that serves as the starting substrate for the three terminal pathways of aromatic amino acid biosynthesis. This reaction introduces a second double bond into the aromatic ring system. This chain is Chorismate synthase, found in Rhizobium leguminosarum bv. trifolii (strain WSM2304).